Here is a 924-residue protein sequence, read N- to C-terminus: Probable dipeptidyl-aminopeptidase B (924 aa).

A compositionally biased stretch (polar residues) spans 1 to 12 (MPSTYSDDNTLR). The disordered stretch occupies residues 1–102 (MPSTYSDDNT…RSNQRSSADG (102 aa)). The Cytoplasmic portion of the chain corresponds to 1–111 (MPSTYSDDNT…GQRMDRSLRR (111 aa)). Residues 14–23 (GLDRFRDHSP) are compositionally biased toward basic and acidic residues. Polar residues predominate over residues 31–43 (SQETDSTVSTTSI). The span at 47–58 (RIQERLDTKEFP) shows a compositional bias: basic and acidic residues. The segment covering 87 to 100 (NASPSSRSNQRSSA) has biased composition (low complexity). The chain crosses the membrane as a helical; Signal-anchor for type II membrane protein span at residues 112 to 132 (WLFIVSGALVATWVIGLIFFV). The Vacuolar portion of the chain corresponds to 133–924 (SSKAYKPSSS…GMKRRALPTA (792 aa)). Residues Asn-231 and Asn-364 are each glycosylated (N-linked (GlcNAc...) asparagine). The active-site Charge relay system is Ser-768. N-linked (GlcNAc...) asparagine glycosylation occurs at Asn-827. Active-site charge relay system residues include Asp-845 and His-878.

This sequence belongs to the peptidase S9B family.

It localises to the vacuole membrane. It carries out the reaction Release of an N-terminal dipeptide, Xaa-Yaa-|-Zaa-, from a polypeptide, preferentially when Yaa is Pro, provided Zaa is neither Pro nor hydroxyproline.. Functionally, type IV dipeptidyl-peptidase which removes N-terminal dipeptides sequentially from polypeptides having unsubstituted N-termini provided that the penultimate residue is proline. The sequence is that of Probable dipeptidyl-aminopeptidase B (dapB) from Neurospora crassa (strain ATCC 24698 / 74-OR23-1A / CBS 708.71 / DSM 1257 / FGSC 987).